Here is a 311-residue protein sequence, read N- to C-terminus: MAATGTEAKDLENHHNDCFIQLSNPNIAAMKEDVLYHFNLSTSTHDFPAMFGDVKFVCVGGSSSRMNTFIKYVAAELGLDHPGKEYPNICAGTDRYAMYKAGPVLSVSHGMGIPSIGIMLHELIKMLYHARCSNITIIRIGTSGGIGLEPGSVVITQQAVNECFKPEFEQIVLGKRVIRNTNLDAQLVQELVQCSSDLNEFPMVVGNTMCTLDFYEGQGRLDGALCSYTEKDKQSYLRAAHAAGVRNIEMESSVFATMCSACGLKAAVVCVTLLDRLQGDQINTPHDVLVEYQQRPQRLVGHFIKKSLGRA.

Residues Gly-61, Arg-95, and 139–142 (RIGT) each bind phosphate. Residues 143–144 (SG) and 218–220 (QGR) contribute to the uridine site.

It belongs to the PNP/UDP phosphorylase family. As to quaternary structure, homodimer. The N-terminus is blocked.

It carries out the reaction uridine + phosphate = alpha-D-ribose 1-phosphate + uracil. The catalysed reaction is 2'-deoxyuridine + phosphate = 2-deoxy-alpha-D-ribose 1-phosphate + uracil. Its pathway is pyrimidine metabolism; UMP biosynthesis via salvage pathway; uracil from uridine (phosphorylase route): step 1/1. Its activity is regulated as follows. Strongly inhibited by 2,2'-anhydro-5-ethyluridine, a competitive inhibitor. Catalyzes the reversible phosphorylytic cleavage of uridine to uracil and ribose-1-phosphate which can then be utilized as carbon and energy sources or in the rescue of pyrimidine bases for nucleotide synthesis. Shows broad substrate specificity and can also accept deoxyuridine and other analogous compounds. This Mus musculus (Mouse) protein is Uridine phosphorylase 1.